The chain runs to 241 residues: MSQEITQKDNNDHLVQSSDPDHPANMIPDLCRKFYNWGWVTGTGGGTSIRRGDHIFIAPSGVQKELMQPHNIFVLEFPTPKYPPSDRKYIRKPLDLKPSACTPLFLAAFERGAGCCIHTHSQWAVLVTLLVEREKGPGGYFEISNIEQIKGIPRGKGKGMMGFHDTLRIPIIENTAFEEDLTGSLEKAMEENPDTYAVLVKRHGIYVWGDDVAKAKTQCESLDYLFQLAVEMHKLGLPWVK.

The segment covering 1–12 (MSQEITQKDNND) has biased composition (basic and acidic residues). Residues 1 to 22 (MSQEITQKDNNDHLVQSSDPDH) form a disordered region. Cys101 contacts substrate. His118 and His120 together coordinate Zn(2+). The Proton donor/acceptor role is filled by Glu147. Zn(2+) is bound at residue His203.

Belongs to the aldolase class II family. MtnB subfamily. Requires Zn(2+) as cofactor.

It localises to the cytoplasm. The catalysed reaction is 5-(methylsulfanyl)-D-ribulose 1-phosphate = 5-methylsulfanyl-2,3-dioxopentyl phosphate + H2O. Its pathway is amino-acid biosynthesis; L-methionine biosynthesis via salvage pathway; L-methionine from S-methyl-5-thio-alpha-D-ribose 1-phosphate: step 2/6. Its function is as follows. Catalyzes the dehydration of methylthioribulose-1-phosphate (MTRu-1-P) into 2,3-diketo-5-methylthiopentyl-1-phosphate (DK-MTP-1-P). The protein is Methylthioribulose-1-phosphate dehydratase of Aspergillus terreus (strain NIH 2624 / FGSC A1156).